Here is an 897-residue protein sequence, read N- to C-terminus: Translation initiation factor IF-2 (897 aa).

Disordered stretches follow at residues 69 to 88 (RKTKSTISVQGTGGKNKEVQ) and 95 to 304 (RTYV…NAMK). Positions 101–161 (SALEDEQRQA…EEKARIEAQQ (61 aa)) are enriched in basic and acidic residues. A compositionally biased stretch (low complexity) spans 162–179 (KARQAQQPAKAAGSTAQQ). Basic and acidic residues-rich tracts occupy residues 180 to 196 (EAEKMAKREAEELKRQQ), 203 to 217 (KAEELAAKKAEEARV), 226 to 239 (WAEEEAARAKESSD), and 277 to 286 (RREDDRDARN). Basic residues predominate over residues 287-296 (PRARKGKRGK). Residues 397-566 (PRAPVVTIMG…LIQSEVLELK (170 aa)) form the tr-type G domain. The G1 stretch occupies residues 406–413 (GHVDHGKT). 406–413 (GHVDHGKT) is a GTP binding site. The tract at residues 431–435 (GITQH) is G2. A G3 region spans residues 452 to 455 (DTPG). GTP is bound by residues 452-456 (DTPGH) and 506-509 (NKID). The interval 506–509 (NKID) is G4. The tract at residues 542–544 (SAK) is G5.

It belongs to the TRAFAC class translation factor GTPase superfamily. Classic translation factor GTPase family. IF-2 subfamily.

It is found in the cytoplasm. In terms of biological role, one of the essential components for the initiation of protein synthesis. Protects formylmethionyl-tRNA from spontaneous hydrolysis and promotes its binding to the 30S ribosomal subunits. Also involved in the hydrolysis of GTP during the formation of the 70S ribosomal complex. The protein is Translation initiation factor IF-2 of Aeromonas hydrophila subsp. hydrophila (strain ATCC 7966 / DSM 30187 / BCRC 13018 / CCUG 14551 / JCM 1027 / KCTC 2358 / NCIMB 9240 / NCTC 8049).